We begin with the raw amino-acid sequence, 286 residues long: MTGQAEAIRRVHPTVSPKQAAQMLQEDGVIILKSFLAPDVMQRFQAEVDEDVEKTSTGARMKAYKLVNDKTKHMADLIVRSEVFRSDILTHPLYHAIADELFRADYGDHWLNASAVLQLMPGAPAQQLHRDEEIFAASKFRSPTDPQLSLSCLVALTEFTEENGATRLIPGSHLWDSAHPAPSPDQTVPAIMQPGEAILFLGSLFHGGGENRTENVRRGLGMSLIPCQFTPYSSHMHVPRTIIETMTPLAQKLVGWRTVESHRQYPFWQGGDRRLEDVLGLASREA.

His129, Asp131, and His206 together coordinate Fe cation.

Belongs to the PhyH family. Homodimer. Requires Fe cation as cofactor.

Its pathway is secondary metabolite biosynthesis; terpenoid biosynthesis. Dioxygenase; part of the gene cluster that mediates the biosynthesis of terretonin, a fungal meroterpenoid that acts as a mycotoxin. The first step of the pathway is the synthesis of 3,5-dimethylorsellinic acid (DMOA) by the polyketide synthase trt4. DMOA is then prenylated into farnesyl-DMOA by the polyprenyl transferase trt2. Methylation by the methyltransferase trt5 then leads to farnesyl-DMOA methyl ester which is further subject to epoxidation by the FAD-dependent monooxygenase trt8 to yield epoxyfarnesyl-DMOA methyl ester. Cyclization of epoxyfarnesyl-DMOA methyl ester by the terpene cyclase trt1 leads to a tetracycle intermediate which is in turn converted to preterretonin. Dehydrogenase trt9 comes next to transform preterretonin to preterrenoid. The FAD-dependent monooxygenase trt3 is then required for the C-hydroxylation at C16 of preterrenoid to yield terrenoid. The cytochrome P450 trt6 catalyzes three successive oxidations to transform terrenoid into an unstable intermediate, which then undergoes the D-ring expansion and unusual rearrangement of the methoxy group to afford the core skeleton of terretonin. Trt14 catalyzes the D-ring expansion of terretonin involving intramolecular methoxy rearrangement as well as the hydrolysis of the expanded D-ring and the methyl ester moiety. Finally, the nonheme iron-dependent dioxygenase trt7 accomplishes the last two oxidation reactions steps to complete the biosynthesis of terretonin. Terretonin C is produced via spontaneous decarboxylation of the terretonin precursor. Another shunt product of the terretonin biosynthesis is dihydrofarnesyl-DMOA, derived from epoxyfarnesyl-DMOA through hydrolysis of the epoxide. In Aspergillus terreus (strain NIH 2624 / FGSC A1156), this protein is Dioxygenase trt7.